We begin with the raw amino-acid sequence, 340 residues long: Heat-inducible transcription repressor HrcA (340 aa).

This sequence belongs to the HrcA family.

Negative regulator of class I heat shock genes (grpE-dnaK-dnaJ and groELS operons). Prevents heat-shock induction of these operons. This is Heat-inducible transcription repressor HrcA from Chromobacterium violaceum (strain ATCC 12472 / DSM 30191 / JCM 1249 / CCUG 213 / NBRC 12614 / NCIMB 9131 / NCTC 9757 / MK).